The primary structure comprises 207 residues: Large ribosomal subunit protein uL4 (207 aa).

It belongs to the universal ribosomal protein uL4 family. As to quaternary structure, part of the 50S ribosomal subunit.

Functionally, one of the primary rRNA binding proteins, this protein initially binds near the 5'-end of the 23S rRNA. It is important during the early stages of 50S assembly. It makes multiple contacts with different domains of the 23S rRNA in the assembled 50S subunit and ribosome. Its function is as follows. Forms part of the polypeptide exit tunnel. In Rickettsia peacockii (strain Rustic), this protein is Large ribosomal subunit protein uL4.